Consider the following 215-residue polypeptide: Proteasome subunit beta inpE (215 aa).

The protein belongs to the peptidase T1B family.

The protein localises to the cytoplasm. The protein resides in the nucleus. The catalysed reaction is Cleavage of peptide bonds with very broad specificity.. In terms of biological role, proteasome subunit beta type-6; part of the inp gene cluster that mediates the biosynthesis of fellutamide B, a mycotoxin that acts as a proteasome inhibitor. In the first step of fellutabmide B biosynthesis inpC activates 3-hydroxydodecanoic acid to generate 3-hydroxydodecanoyl-AMP that is then loaded onto the T0 domain of inpB. The 3-hydroxydodecanoyl-S-phosphopantetheinyl-T0 is sequentially extended with L-Asn and L-Gln by the two CAT modules of inpB. The linear lipodipeptide from inpB is then transferred onto inpA for the addition of the third amino acid, L-Leu. Reductive releasing of the lipotripeptide by the TE domain of inpA produces (2S)-fellutamide B. InpF might be involved in the release and transfer of the lipodipeptide from inpB to inpA. The inp cluster-encoded proteasome subunit inpE confers resistance to internally produced fellutamides. The MFS efflux transporter inpD may contribute to fellutamide resistance as well. The chain is Proteasome subunit beta inpE (inpE) from Emericella nidulans (strain FGSC A4 / ATCC 38163 / CBS 112.46 / NRRL 194 / M139) (Aspergillus nidulans).